Reading from the N-terminus, the 90-residue chain is Small ribosomal subunit protein uS19 (90 aa).

Belongs to the universal ribosomal protein uS19 family.

In terms of biological role, protein S19 forms a complex with S13 that binds strongly to the 16S ribosomal RNA. This Rhizorhabdus wittichii (strain DSM 6014 / CCUG 31198 / JCM 15750 / NBRC 105917 / EY 4224 / RW1) (Sphingomonas wittichii) protein is Small ribosomal subunit protein uS19.